The primary structure comprises 277 residues: Putative phosphoenolpyruvate synthase regulatory protein (277 aa).

Residue 157–164 (GVSRSGKT) coordinates ADP.

This sequence belongs to the pyruvate, phosphate/water dikinase regulatory protein family. PSRP subfamily.

It carries out the reaction [pyruvate, water dikinase] + ADP = [pyruvate, water dikinase]-phosphate + AMP + H(+). The catalysed reaction is [pyruvate, water dikinase]-phosphate + phosphate + H(+) = [pyruvate, water dikinase] + diphosphate. Functionally, bifunctional serine/threonine kinase and phosphorylase involved in the regulation of the phosphoenolpyruvate synthase (PEPS) by catalyzing its phosphorylation/dephosphorylation. This Vibrio atlanticus (strain LGP32) (Vibrio splendidus (strain Mel32)) protein is Putative phosphoenolpyruvate synthase regulatory protein.